The primary structure comprises 416 residues: Probable protein phosphatase 2C 49 (416 aa).

The PPM-type phosphatase domain maps to 91 to 411 (RYGVTSVFGR…DNVSVVVVDL (321 aa)). Positions 131, 132, and 319 each coordinate Mn(2+). Residues 343–360 (PPSPPGCSRPKAVLPPPA) are compositionally biased toward pro residues. Residues 343–368 (PPSPPGCSRPKAVLPPPAGASGGGGG) form a disordered region. D402 contacts Mn(2+).

Belongs to the PP2C family. Requires Mg(2+) as cofactor. It depends on Mn(2+) as a cofactor.

The enzyme catalyses O-phospho-L-seryl-[protein] + H2O = L-seryl-[protein] + phosphate. It carries out the reaction O-phospho-L-threonyl-[protein] + H2O = L-threonyl-[protein] + phosphate. The protein is Probable protein phosphatase 2C 49 of Oryza sativa subsp. japonica (Rice).